The sequence spans 162 residues: Beta-lactoglobulin (162 aa).

Disulfide bonds link cysteine 66/cysteine 160, cysteine 106/cysteine 119, and cysteine 106/cysteine 121.

It belongs to the calycin superfamily. Lipocalin family. As to quaternary structure, under physiological conditions beta-lactoglobulin exists as an equilibrium mixture of monomeric and dimeric forms. In terms of processing, alternate disulfide bonds occur in equal amounts.

It is found in the secreted. In terms of biological role, lactoglobulin is the primary component of whey, it binds retinol and is probably involved in the transport of that molecule. In Ovis aries musimon (Mouflon), this protein is Beta-lactoglobulin (LGB).